A 344-amino-acid chain; its full sequence is MGQKVHPYGFRLGFNKPWRSRWFAKQGYAKLLQEDLELKAALRERLKSAGVSSIEVDRPGNKLRVTIRTSRPGIIIGRKGAEIEKLKQDMAKKTKREVFIDIQEVHKPELDAQLVSESIALQLEKRVAFRRAMRKAVDSALRFGCKGIKVRVSGRLNGAEIARSEWYLQGQLPLHTLRADIDYGFAEAHTTYGVIGIKAWLYKGEILDLTKRRNLLPEPEPRREQRRDRPDRRDRDGRGGDRDRGGDRGGYRGGDRGDRPPVQSAPPVEATGPAVQTPPSDLPRPAARPVAPILPPLMAPQQPSWKQEVRQDTPSAEGAPEAKPAADENNPGTEQKPEGSGENQ.

The KH type-2 domain occupies 38 to 106; sequence LKAALRERLK…EVFIDIQEVH (69 aa). A disordered region spans residues 217-344; it reads PEPEPRREQR…QKPEGSGENQ (128 aa). Basic and acidic residues-rich tracts occupy residues 219-259 and 335-344; these read PEPR…RGDR and QKPEGSGENQ.

The protein belongs to the universal ribosomal protein uS3 family. In terms of assembly, part of the 30S ribosomal subunit. Forms a tight complex with proteins S10 and S14.

In terms of biological role, binds the lower part of the 30S subunit head. Binds mRNA in the 70S ribosome, positioning it for translation. This chain is Small ribosomal subunit protein uS3, found in Solibacter usitatus (strain Ellin6076).